A 302-amino-acid chain; its full sequence is Oxygen-dependent coproporphyrinogen-III oxidase (302 aa).

Residue serine 90 participates in substrate binding. The a divalent metal cation site is built by histidine 94 and histidine 104. Histidine 104 functions as the Proton donor in the catalytic mechanism. 106-108 (NVR) lines the substrate pocket. A divalent metal cation-binding residues include histidine 143 and histidine 173. Residues 238 to 273 (YVEFNLIYDRGTIFGLQSNGRTESILLSMPPIVKWR) form an important for dimerization region.

Belongs to the aerobic coproporphyrinogen-III oxidase family. Homodimer. A divalent metal cation serves as cofactor.

Its subcellular location is the cytoplasm. The catalysed reaction is coproporphyrinogen III + O2 + 2 H(+) = protoporphyrinogen IX + 2 CO2 + 2 H2O. Its pathway is porphyrin-containing compound metabolism; protoporphyrin-IX biosynthesis; protoporphyrinogen-IX from coproporphyrinogen-III (O2 route): step 1/1. Its function is as follows. Involved in the heme biosynthesis. Catalyzes the aerobic oxidative decarboxylation of propionate groups of rings A and B of coproporphyrinogen-III to yield the vinyl groups in protoporphyrinogen-IX. This chain is Oxygen-dependent coproporphyrinogen-III oxidase, found in Methylobacillus flagellatus (strain ATCC 51484 / DSM 6875 / VKM B-1610 / KT).